The following is a 757-amino-acid chain: Transcription factor FBD3 (757 aa).

The interval 1–24 is disordered; it reads MSSKRLSQNEQEKSPGTGPPTHKR. Residues 31–58 constitute a DNA-binding region (zn(2)-C6 fungal-type); that stretch reads CNACRMRKSRCDGHRPSCSSCLSLGVNC. Disordered regions lie at residues 106–161 and 202–222; these read GGTD…DANT and VAPSASNQASGPGDGVTTDVP. Over residues 111–120 the composition is skewed to basic and acidic residues; the sequence is NNHHNNHDSP. Residues 125–135 are compositionally biased toward polar residues; sequence TIAQSITSSRP.

The protein resides in the nucleus. Transcription factor; part of the Fusarium detoxification of benzoxazolinone cluster involved in the degradation of benzoxazolinones produced by the host plant. Maize, wheat, and rye produce the 2 benzoxazinone phytoanticipins 2,4-dihy-droxy-7-methoxy-1,4-benzoxazin-3-one (DIMBOA) and 2,4-dihydroxy-1,4-benzoxazin-3-one (DIBOA) that, due to their inherent instability once released, spontaneously degrade to the more stable corresponding benzoxazolinones, 6-methoxy-2-benzoxazolinone (MBOA) and 2-benzoxazolinone (BOA), respectively. FDB3 controls the transcription of the FDB gene cluster in response to 6-methoxy-2-benzoxazolinone (MBOA). The polypeptide is Transcription factor FBD3 (Fusarium pseudograminearum (strain CS3096) (Wheat and barley crown-rot fungus)).